Here is a 232-residue protein sequence, read N- to C-terminus: MIDLTQEKQEILIKNKFLAKVFGLMSIGLLISAVFAYATSENQTIKAIIFSNSMSFMAMILIQFGLVYAISGALNKISSNTATALFLLYSALTGVTLSSIFMIYTQGSIVFTFGITAGTFLGMSVYGYTTTTDLTKMGSYLIMGLWGIIIASLVNMFFRSSGLNFLISILGVVIFTGLTAYDVQNISKMDKMLQDDTEIKNRMAVVASLKLYLDFINLFLYLLRFLGQRRND.

Transmembrane regions (helical) follow at residues 17–37, 54–74, 84–104, 107–127, 138–158, 161–181, and 203–223; these read FLAK…VFAY, MSFM…SGAL, ALFL…FMIY, GSIV…SVYG, GSYL…NMFF, SGLN…LTAY, and MAVV…LYLL.

This sequence belongs to the BI1 family.

The protein localises to the cell membrane. This is an uncharacterized protein from Borreliella burgdorferi (strain ATCC 35210 / DSM 4680 / CIP 102532 / B31) (Borrelia burgdorferi).